A 280-amino-acid chain; its full sequence is F420-dependent methylenetetrahydromethanopterin dehydrogenase (280 aa).

Belongs to the MTD family.

It catalyses the reaction 5,10-methylenetetrahydromethanopterin + oxidized coenzyme F420-(gamma-L-Glu)(n) + 2 H(+) = 5,10-methenyl-5,6,7,8-tetrahydromethanopterin + reduced coenzyme F420-(gamma-L-Glu)(n). Its pathway is one-carbon metabolism; methanogenesis from CO(2); 5,10-methylene-5,6,7,8-tetrahydromethanopterin from 5,10-methenyl-5,6,7,8-tetrahydromethanopterin (coenzyme F420 route): step 1/1. Functionally, catalyzes the reversible reduction of methenyl-H(4)MPT(+) to methylene-H(4)MPT. This Methanosphaerula palustris (strain ATCC BAA-1556 / DSM 19958 / E1-9c) protein is F420-dependent methylenetetrahydromethanopterin dehydrogenase.